Consider the following 836-residue polypeptide: Protein O-mannosyl-transferase TMTC2 (836 aa).

Residues 1-21 (MIAELVSSALGLALYLNTLSA) traverse the membrane as a helical segment. The Extracellular portion of the chain corresponds to 22–84 (DFCYDDSRAI…LNHAIGGLNP (63 aa)). Residues 85–105 (WSYHLVNVLLHAAVTGLFTSF) traverse the membrane as a helical segment. Over 106 to 107 (SK) the chain is Cytoplasmic. The chain crosses the membrane as a helical span at residues 108–128 (ILLGDGYWTFMAGLMFASHPI). Over 129–132 (HTEA) the chain is Extracellular. Residues 133–153 (VAGIVGRADVGASLFFLLSLL) traverse the membrane as a helical segment. Over 154 to 162 (CYIKHCSTR) the chain is Cytoplasmic. 2 consecutive transmembrane segments (helical) span residues 163–184 (GYSA…CSML) and 185–204 (WKEQ…VFVF). The Cytoplasmic portion of the chain corresponds to 205-220 (HRLKIKQILPTIYKRK). A helical membrane pass occupies residues 221-241 (NLSLFLSISLLIFWGSSLLGA). At 242–312 (RLYWMGNKPP…KTVCDWRNLH (71 aa)) the chain is on the extracellular side. Residues 313-333 (TVAFYTGLLLLAYYGLKSPSV) traverse the membrane as a helical segment. The Cytoplasmic segment spans residues 334–399 (DRECNGKTVT…TENIVVLSLS (66 aa)). The chain crosses the membrane as a helical span at residues 400–420 (LLIIPFVPATNLFFYVGFVIA). Residues 421 to 422 (ER) are Extracellular-facing. A helical membrane pass occupies residues 423-443 (VLYIPSMGFCLLITVGARALY). Topologically, residues 444–449 (VKVQKR) are cytoplasmic. Residues 450–470 (FLKSLIFYATATLIVFYGLKT) traverse the membrane as a helical segment. Over 471-836 (AIRNGDWQNE…EKQGLKTSKT (366 aa)) the chain is Extracellular. 9 TPR repeats span residues 493-526 (AKAW…RSNM), 527-560 (ADML…RPTL), 561-594 (ASAY…PDEN), 606-639 (TSCL…MPRQ), 643-676 (QSLY…KTDH), 677-710 (IPAH…DPTK), 711-744 (GNCY…DSTE), 745-778 (FDVV…RPNY), and 779-812 (PAAL…KPDD).

The protein belongs to the TMTC family.

It localises to the membrane. Its subcellular location is the endoplasmic reticulum. The enzyme catalyses a di-trans,poly-cis-dolichyl beta-D-mannosyl phosphate + L-seryl-[protein] = 3-O-(alpha-D-mannosyl)-L-seryl-[protein] + a di-trans,poly-cis-dolichyl phosphate + H(+). It catalyses the reaction a di-trans,poly-cis-dolichyl beta-D-mannosyl phosphate + L-threonyl-[protein] = 3-O-(alpha-D-mannosyl)-L-threonyl-[protein] + a di-trans,poly-cis-dolichyl phosphate + H(+). The protein operates within protein modification; protein glycosylation. Its function is as follows. Transfers mannosyl residues to the hydroxyl group of serine or threonine residues. The 4 members of the TMTC family are O-mannosyl-transferases dedicated primarily to the cadherin superfamily, each member seems to have a distinct role in decorating the cadherin domains with O-linked mannose glycans at specific regions. Also acts as O-mannosyl-transferase on other proteins such as PDIA3. This chain is Protein O-mannosyl-transferase TMTC2, found in Homo sapiens (Human).